Here is a 107-residue protein sequence, read N- to C-terminus: Large ribosomal subunit protein uL18c (107 aa).

It belongs to the universal ribosomal protein uL18 family. In terms of assembly, part of the 50S ribosomal subunit; contacts the 5S rRNA.

It is found in the plastid. Its subcellular location is the chloroplast. Its function is as follows. Binds 5S rRNA, forms part of the central protuberance of the 50S subunit. The sequence is that of Large ribosomal subunit protein uL18c (rpl18) from Guillardia theta (Cryptophyte).